Here is a 202-residue protein sequence, read N- to C-terminus: Protein-methionine-sulfoxide reductase heme-binding subunit MsrQ (202 aa).

6 consecutive transmembrane segments (helical) span residues 8-28, 42-62, 75-95, 110-130, 147-167, and 169-189; these read LAVF…AWIF, LGLG…LQKL, LGLW…VFIL, PYII…ITSN, LVYL…RADL, and EWTL…PSIA.

The protein belongs to the MsrQ family. Heterodimer of a catalytic subunit (MsrP) and a heme-binding subunit (MsrQ). Requires FMN as cofactor. Heme b serves as cofactor.

It is found in the cell inner membrane. Functionally, part of the MsrPQ system that repairs oxidized periplasmic proteins containing methionine sulfoxide residues (Met-O), using respiratory chain electrons. Thus protects these proteins from oxidative-stress damage caused by reactive species of oxygen and chlorine generated by the host defense mechanisms. MsrPQ is essential for the maintenance of envelope integrity under bleach stress, rescuing a wide series of structurally unrelated periplasmic proteins from methionine oxidation. MsrQ provides electrons for reduction to the reductase catalytic subunit MsrP, using the quinone pool of the respiratory chain. The polypeptide is Protein-methionine-sulfoxide reductase heme-binding subunit MsrQ (Pseudomonas aeruginosa (strain ATCC 15692 / DSM 22644 / CIP 104116 / JCM 14847 / LMG 12228 / 1C / PRS 101 / PAO1)).